The chain runs to 73 residues: Protein WFDC10B (73 aa).

Residues 1–21 (MAPQTLLLVLVLCVLLLQAQG) form the signal peptide. Residues 28–73 (RMQRIKVCEKRPSIDLCIHHCSYFQKCETNKICCSAFCGNICMSIL) form the WAP domain.

As to expression, ubiquitously expressed.

Its subcellular location is the secreted. This is Protein WFDC10B (WFDC10B) from Homo sapiens (Human).